Consider the following 872-residue polypeptide: Valine--tRNA ligase (872 aa).

Positions 49 to 59 (PNVTGILHIGH) match the 'HIGH' region motif. The 'KMSKS' region motif lies at 531–535 (KMSKS). Lys-534 contacts ATP. Positions 810–871 (PLIARLKKQL…IQQELDLLEQ (62 aa)) form a coiled coil.

The protein belongs to the class-I aminoacyl-tRNA synthetase family. ValS type 1 subfamily. Monomer.

It is found in the cytoplasm. The catalysed reaction is tRNA(Val) + L-valine + ATP = L-valyl-tRNA(Val) + AMP + diphosphate. In terms of biological role, catalyzes the attachment of valine to tRNA(Val). As ValRS can inadvertently accommodate and process structurally similar amino acids such as threonine, to avoid such errors, it has a 'posttransfer' editing activity that hydrolyzes mischarged Thr-tRNA(Val) in a tRNA-dependent manner. The sequence is that of Valine--tRNA ligase from Helicobacter pylori (strain J99 / ATCC 700824) (Campylobacter pylori J99).